Here is a 210-residue protein sequence, read N- to C-terminus: N-(5'-phosphoribosyl)anthranilate isomerase (210 aa).

Belongs to the TrpF family.

The catalysed reaction is N-(5-phospho-beta-D-ribosyl)anthranilate = 1-(2-carboxyphenylamino)-1-deoxy-D-ribulose 5-phosphate. Its pathway is amino-acid biosynthesis; L-tryptophan biosynthesis; L-tryptophan from chorismate: step 3/5. This Pseudomonas fluorescens (strain ATCC BAA-477 / NRRL B-23932 / Pf-5) protein is N-(5'-phosphoribosyl)anthranilate isomerase.